The following is a 518-amino-acid chain: Xylose import ATP-binding protein XylG (518 aa).

ABC transporter domains follow at residues Leu-6–Glu-245 and Phe-262–Pro-507. Gly-38–Ser-45 is an ATP binding site.

It belongs to the ABC transporter superfamily. Xylose importer (TC 3.A.1.2.4) family. The complex is composed of two ATP-binding proteins (XylG), two transmembrane proteins (XylH) and a solute-binding protein (XylF).

Its subcellular location is the cell inner membrane. The enzyme catalyses D-xylose(out) + ATP + H2O = D-xylose(in) + ADP + phosphate + H(+). Functionally, part of the ABC transporter complex XylFGH involved in xylose import. Responsible for energy coupling to the transport system. This Pseudomonas savastanoi pv. phaseolicola (strain 1448A / Race 6) (Pseudomonas syringae pv. phaseolicola (strain 1448A / Race 6)) protein is Xylose import ATP-binding protein XylG.